The following is a 216-amino-acid chain: GTP cyclohydrolase 1 2 (216 aa).

This sequence belongs to the GTP cyclohydrolase I family. As to quaternary structure, homomer.

It carries out the reaction GTP + H2O = 7,8-dihydroneopterin 3'-triphosphate + formate + H(+). Its pathway is cofactor biosynthesis; 7,8-dihydroneopterin triphosphate biosynthesis; 7,8-dihydroneopterin triphosphate from GTP: step 1/1. In Nostoc sp. (strain PCC 7120 / SAG 25.82 / UTEX 2576), this protein is GTP cyclohydrolase 1 2 (folE2).